We begin with the raw amino-acid sequence, 195 residues long: Transcriptional regulator GfcR (195 aa).

This sequence belongs to the purine/pyrimidine phosphoribosyltransferase family. GfcR subfamily.

The chain is Transcriptional regulator GfcR from Archaeoglobus fulgidus (strain ATCC 49558 / DSM 4304 / JCM 9628 / NBRC 100126 / VC-16).